Consider the following 121-residue polypeptide: Small ribosomal subunit protein uS13 (121 aa).

The segment at 92 to 121 (RKGLPMRGQRTRTNARTRKGPRRAAQALKK) is disordered.

The protein belongs to the universal ribosomal protein uS13 family. Part of the 30S ribosomal subunit. Forms a loose heterodimer with protein S19. Forms two bridges to the 50S subunit in the 70S ribosome.

Functionally, located at the top of the head of the 30S subunit, it contacts several helices of the 16S rRNA. In the 70S ribosome it contacts the 23S rRNA (bridge B1a) and protein L5 of the 50S subunit (bridge B1b), connecting the 2 subunits; these bridges are implicated in subunit movement. Contacts the tRNAs in the A and P-sites. This chain is Small ribosomal subunit protein uS13, found in Burkholderia cenocepacia (strain ATCC BAA-245 / DSM 16553 / LMG 16656 / NCTC 13227 / J2315 / CF5610) (Burkholderia cepacia (strain J2315)).